The sequence spans 568 residues: 2-succinyl-5-enolpyruvyl-6-hydroxy-3-cyclohexene-1-carboxylate synthase (568 aa).

The protein belongs to the TPP enzyme family. MenD subfamily. In terms of assembly, homodimer. Mg(2+) serves as cofactor. The cofactor is Mn(2+). Thiamine diphosphate is required as a cofactor.

It carries out the reaction isochorismate + 2-oxoglutarate + H(+) = 5-enolpyruvoyl-6-hydroxy-2-succinyl-cyclohex-3-ene-1-carboxylate + CO2. It functions in the pathway quinol/quinone metabolism; 1,4-dihydroxy-2-naphthoate biosynthesis; 1,4-dihydroxy-2-naphthoate from chorismate: step 2/7. Its pathway is cofactor biosynthesis; phylloquinone biosynthesis. Functionally, catalyzes the thiamine diphosphate-dependent decarboxylation of 2-oxoglutarate and the subsequent addition of the resulting succinic semialdehyde-thiamine pyrophosphate anion to isochorismate to yield 2-succinyl-5-enolpyruvyl-6-hydroxy-3-cyclohexene-1-carboxylate (SEPHCHC). This is 2-succinyl-5-enolpyruvyl-6-hydroxy-3-cyclohexene-1-carboxylate synthase from Synechococcus sp. (strain CC9902).